Here is a 1537-residue protein sequence, read N- to C-terminus: DNA (cytosine-5)-methyltransferase 1 (1537 aa).

Residues 1 to 13 (MPARSAPPPPALP) are compositionally biased toward pro residues. Disordered regions lie at residues 1 to 34 (MPAR…SEKE) and 97 to 232 (RASN…DEKR). Residues 8-105 (PPPALPPALR…SRASNGCAGN (98 aa)) enclose the DMAP1-binding domain. Basic and acidic residues predominate over residues 21 to 34 (RDLERDEDSLSEKE). Positions 129 to 154 (SSSSSSSSSSSSSSSSSSSSSLLPAP) are enriched in low complexity. Over residues 171-194 (SPASSRVTRSSGRQPTILSVFSKG) the composition is skewed to polar residues. The interaction with PCNA stretch occupies residues 182–194 (GRQPTILSVFSKG). The span at 215-227 (KDEEEEEELEEKE) shows a compositional bias: acidic residues. Zn(2+)-binding residues include Cys263, Cys266, and His329. Ser420 bears the Phosphoserine mark. The segment at 558–604 (NAMKRRRCGVCEVCQQPECGKCKACQNMVKFGGSGRSKQACLQRRCP) adopts a CXXC-type zinc-finger fold. Zn(2+)-binding residues include Cys565, Cys568, Cys571, Cys576, Cys579, Cys582, Cys598, and Cys603. The tract at residues 614 to 638 (DEEVDDNIPEMPSPKKMLQGRKKKQ) is disordered. 2 consecutive BAH domains span residues 667 to 791 (ETLE…ETPP) and 883 to 1011 (HYRK…EDPP). The segment at 1006–1050 (SFEDPPNHARSSGNKGKGKGKGKGKGKGKSSTTCEQSEPEPTELK) is disordered. Tandem repeats lie at residues 1020–1021 (KG), 1022–1023 (KG), 1024–1025 (KG), 1026–1027 (KG), 1028–1029 (KG), 1030–1031 (KG), and 1032–1033 (KG). Positions 1020–1035 (KGKGKGKGKGKGKGKS) are 8 X 2 AA tandem repeats of K-G. Positions 1021–1033 (GKGKGKGKGKGKG) are enriched in basic residues. Residues 1034 to 1035 (KS) form an 8; approximate repeat. The SAM-dependent MTase C5-type domain occupies 1054–1513 (LRTLDVFSGC…LEIRACVGAR (460 aa)). Residues Ser1061, 1065–1066 (GL), 1083–1084 (EM), 1105–1106 (DC), and Cys1106 contribute to the S-adenosyl-L-methionine site. Residue Cys1141 is part of the active site. Asn1492 and Val1494 together coordinate S-adenosyl-L-methionine. The disordered stretch occupies residues 1518–1537 (SGAAVAPPAPEKMEMTAAAD).

The protein belongs to the class I-like SAM-binding methyltransferase superfamily. C5-methyltransferase family. In terms of assembly, homodimer. Interacts with PCNA. As to expression, testis and lung.

The protein resides in the nucleus. The enzyme catalyses a 2'-deoxycytidine in DNA + S-adenosyl-L-methionine = a 5-methyl-2'-deoxycytidine in DNA + S-adenosyl-L-homocysteine + H(+). Its function is as follows. Methylates CpG residues. Preferentially methylates hemimethylated DNA. It is responsible for maintaining methylation patterns established in development. Mediates transcriptional repression by direct binding to HDAC2. Plays a role in promoter hypermethylation and transcriptional silencing of tumor suppressor genes (TSGs) or other tumor-related genes. Also required to maintain a transcriptionally repressive state of genes in undifferentiated embryonic stem cells (ESCs). Associates at promoter regions of tumor suppressor genes (TSGs) leading to their gene silencing. This Gallus gallus (Chicken) protein is DNA (cytosine-5)-methyltransferase 1 (DNMT1).